A 212-amino-acid polypeptide reads, in one-letter code: Pyridoxine/pyridoxamine 5'-phosphate oxidase (212 aa).

Substrate-binding positions include 8–11 and Lys-66; that span reads RREY. Residues 61-66, 76-77, Arg-82, Lys-83, and Gln-105 contribute to the FMN site; these read RIVLLK and FT. Substrate is bound by residues Tyr-123, Arg-127, and Ser-131. FMN is bound by residues 140–141 and Trp-185; that span reads QS. Residue 191–193 coordinates substrate; it reads RLH. Residue Arg-195 coordinates FMN.

Belongs to the pyridoxamine 5'-phosphate oxidase family. In terms of assembly, homodimer. FMN is required as a cofactor.

It carries out the reaction pyridoxamine 5'-phosphate + O2 + H2O = pyridoxal 5'-phosphate + H2O2 + NH4(+). It catalyses the reaction pyridoxine 5'-phosphate + O2 = pyridoxal 5'-phosphate + H2O2. Its pathway is cofactor metabolism; pyridoxal 5'-phosphate salvage; pyridoxal 5'-phosphate from pyridoxamine 5'-phosphate: step 1/1. It functions in the pathway cofactor metabolism; pyridoxal 5'-phosphate salvage; pyridoxal 5'-phosphate from pyridoxine 5'-phosphate: step 1/1. Functionally, catalyzes the oxidation of either pyridoxine 5'-phosphate (PNP) or pyridoxamine 5'-phosphate (PMP) into pyridoxal 5'-phosphate (PLP). This Shewanella sp. (strain MR-7) protein is Pyridoxine/pyridoxamine 5'-phosphate oxidase.